A 415-amino-acid polypeptide reads, in one-letter code: PRKCA-binding protein (415 aa).

A PDZ domain is found at 22–105 (KVTLQKDAQN…EVTIHYNKLQ (84 aa)). Residues cysteine 44 and cysteine 46 each coordinate Zn(2+). Threonine 82 carries the post-translational modification Phosphothreonine. One can recognise an AH domain in the interval 144–357 (LCNDGLVKRL…CYAVLRDADV (214 aa)). The tract at residues 376–415 (EEFTDGEEEEEEEDTAAGEPSRDTRGAAGPLDKGGSWCDS) is disordered. Acidic residues predominate over residues 377–391 (EFTDGEEEEEEEDTA). Cysteine 413 is lipidated: S-palmitoyl cysteine; by DHHC8.

Monomer and homodimer. Interacts with CXADR. Interacts presynaptically with the glutamate receptors GRIA2, GRIA3, GRIK3, isoform 3 of GRIA4, isoform A of GRM4, GRM7 and GRM8; with NAPA and NAPB; and with BTG2. The interaction with NAPA and NAPB disrupts the interaction with GRIA2, conducting to the internalization of GRIA2. Interacts with PRKCA; with the amine transporters SLC6A2 and SLC6A3; with the channels ASIC1 and ASIC2; with the GTP-binding proteins ARF1 and ARF3; with the ephrin receptor tyrosine kinases EPHA7, EPHB1 and EPHB2; with ERBB2 and through its PDZ domain with the C-terminal tail of PRLHR. Interacts with UNC5A. Interacts (via AH domain) with NCS1/FREQ; in a calcium-dependent manner. Interacts with F-actin and associates with the ARP2/3 complex. Interacts (via PDZ domain) with ARF1 (activated); the interaction blocks Arp2/3 complex inhibition. Interacts with SORCS3. In terms of processing, phosphorylation at Thr-82 appears to inhibit the interaction with AMPA receptors. Palmitoylation on Cys-413 is essential for long-term synaptic depression (LTD). In terms of tissue distribution, ubiquitous.

The protein localises to the cytoplasm. Its subcellular location is the perinuclear region. It localises to the membrane. The protein resides in the postsynaptic density. It is found in the synapse. The protein localises to the synaptosome. Its subcellular location is the cytoskeleton. Functionally, probable adapter protein that bind to and organize the subcellular localization of a variety of membrane proteins containing some PDZ recognition sequence. Involved in the clustering of various receptors, possibly by acting at the receptor internalization level. Plays a role in synaptic plasticity by regulating the trafficking and internalization of AMPA receptors. May be regulated upon PRKCA activation. May regulate ASIC1/ASIC3 channel. Regulates actin polymerization by inhibiting the actin-nucleating activity of the Arp2/3 complex; the function is competitive with nucleation promoting factors and is linked to neuronal morphology regulation and AMPA receptor (AMPAR) endocytosis. Via interaction with the Arp2/3 complex involved in regulation of synaptic plasicity of excitatory synapses and required for spine shrinkage during long-term depression (LTD). Involved in regulation of astrocyte morphology, antagonistic to Arp2/3 complex activator WASL/N-WASP function. This Homo sapiens (Human) protein is PRKCA-binding protein (PICK1).